Reading from the N-terminus, the 425-residue chain is Serine--tRNA ligase (425 aa).

Threonine 233 to glutamate 235 contacts L-serine. Residue arginine 264 to glutamate 266 coordinates ATP. Glutamate 287 contacts L-serine. Glutamate 351 to serine 354 is a binding site for ATP. Serine 385 is an L-serine binding site.

It belongs to the class-II aminoacyl-tRNA synthetase family. Type-1 seryl-tRNA synthetase subfamily. In terms of assembly, homodimer. The tRNA molecule binds across the dimer.

It is found in the cytoplasm. The enzyme catalyses tRNA(Ser) + L-serine + ATP = L-seryl-tRNA(Ser) + AMP + diphosphate + H(+). It carries out the reaction tRNA(Sec) + L-serine + ATP = L-seryl-tRNA(Sec) + AMP + diphosphate + H(+). The protein operates within aminoacyl-tRNA biosynthesis; selenocysteinyl-tRNA(Sec) biosynthesis; L-seryl-tRNA(Sec) from L-serine and tRNA(Sec): step 1/1. Catalyzes the attachment of serine to tRNA(Ser). Is also able to aminoacylate tRNA(Sec) with serine, to form the misacylated tRNA L-seryl-tRNA(Sec), which will be further converted into selenocysteinyl-tRNA(Sec). In Prochlorococcus marinus (strain SARG / CCMP1375 / SS120), this protein is Serine--tRNA ligase.